A 43-amino-acid polypeptide reads, in one-letter code: Defensin (43 aa).

3 disulfides stabilise this stretch: cysteine 3-cysteine 34, cysteine 20-cysteine 39, and cysteine 24-cysteine 41.

Its subcellular location is the secreted. In terms of biological role, antibacterial peptide. Affects Gram-negative bacteria including methicillin-resistant Staphylococcus aureus. This is Defensin from Trypoxylus dichotomus (Japanese rhinoceros beetle).